A 67-amino-acid chain; its full sequence is Protein AaeX (67 aa).

The next 2 helical transmembrane spans lie at 3-23 (VLPVVVVFGMSFPPIFIEIIV) and 43-63 (LVWHPALFNTALYCCLFYVVS).

It belongs to the AaeX family.

Its subcellular location is the cell membrane. The protein is Protein AaeX of Erwinia tasmaniensis (strain DSM 17950 / CFBP 7177 / CIP 109463 / NCPPB 4357 / Et1/99).